We begin with the raw amino-acid sequence, 185 residues long: Prenylated Rab acceptor protein 1 (185 aa).

Over 1-78 (MAAQKDQQKD…RNVEYYQSNY (78 aa)) the chain is Cytoplasmic. The tract at residues 30-54 (AGREWLERRRATIRPWSTFVDQQRF) is required for interaction with prenylated RAB3A and VAMP2. 2 helical membrane passes run 79–94 (VFVF…VTSP) and 95–112 (MLLV…ILYL). Over 113 to 131 (RTLESKLVLFGREVSPAHQ) the chain is Cytoplasmic. 2 helical membrane passes run 132-148 (YALA…LAGA) and 149-165 (GSAV…VIGS). Residues 165 to 185 (SHAAFHQIEAVDGEELQMEPV) are required for interaction with GDI1. Topologically, residues 166–185 (HAAFHQIEAVDGEELQMEPV) are cytoplasmic. The tract at residues 175–185 (VDGEELQMEPV) is required for interaction with prenylated RAB3A and VAMP2. The interval 175-185 (VDGEELQMEPV) is homodimerization.

This sequence belongs to the PRA1 family. In terms of assembly, homodimer. Interacts with VAMP2 (synaptobrevin-2), GDI1, and PCLO. Interacts specifically with prenylated Rab proteins; strongly with RAB4B, RAB5A and RAB5C, and weakly with RAB4A, RAB6, RAB7A, RAB17 and RAB22. Interacts with NDRG1. As to expression, ubiquitous. Strongest expression found in placenta, pituitary gland, kidney, lung and stomach.

Its subcellular location is the cell membrane. It localises to the cytoplasm. The protein resides in the golgi apparatus. It is found in the cytoplasmic vesicle. The protein localises to the secretory vesicle. Its subcellular location is the synaptic vesicle. Its function is as follows. General Rab protein regulator required for vesicle formation from the Golgi complex. May control vesicle docking and fusion by mediating the action of Rab GTPases to the SNARE complexes. In addition it inhibits the removal of Rab GTPases from the membrane by GDI. The polypeptide is Prenylated Rab acceptor protein 1 (RABAC1) (Homo sapiens (Human)).